The following is a 3085-amino-acid chain: Genome polyprotein (3085 aa).

The 144-residue stretch at 170–313 (LVAKSDFDDL…AGDVGRTMHY (144 aa)) folds into the Peptidase S30 domain. Active-site for P1 proteinase activity residues include His224, Glu233, and Ser266. The Involved in interaction with stylet and aphid transmission signature appears at 365 to 368 (KMAC). An Involved in virions binding and aphid transmission motif is present at residues 622 to 624 (PTK). The region spanning 648–770 (MYIAKEGYCY…EGEMKWYRVG (123 aa)) is the Peptidase C6 domain. Catalysis depends on for helper component proteinase activity residues Cys656 and His729. In terms of domain architecture, Helicase ATP-binding spans 1241-1393 (TICASSEQEF…TQHDVLIKIE (153 aa)). 1254–1261 (GAVGSGKS) is a binding site for ATP. Residues 1343-1346 (DESH) carry the DESH box motif. One can recognise a Helicase C-terminal domain in the interval 1412 to 1571 (DVVQNGDNIL…NLPVMTHNVT (160 aa)). The Nuclear localization signal signature appears at 1895–1904 (ERGKRKGNNS). At Tyr1919 the chain carries O-(5'-phospho-RNA)-tyrosine. The Peptidase C4 domain occupies 2047 to 2266 (GKSIVKGLRN…VAWNGMTLRE (220 aa)). Residues His2092, Asp2127, and Cys2198 each act as for nuclear inclusion protein A activity in the active site. Residues 2535–2659 (WIYCDADGSQ…AIYPSKEKFL (125 aa)) enclose the RdRp catalytic domain. Residues 2801–2869 (DGPDIVTYQG…STAVPRLKQI (69 aa)) are disordered. Residues 2816-2831 (KSSQPQSSSPQVPQQV) show a composition bias toward low complexity. Residues 2839–2855 (GRDKQSVIKHDSTKSKD) show a composition bias toward basic and acidic residues. At Thr3068 the chain carries Phosphothreonine.

This sequence belongs to the potyviridae genome polyprotein family. Interacts with host eIF4E protein (via cap-binding region); this interaction mediates the translation of the VPg-viral RNA conjugates. Part of a complex that comprises VPg, RNA, host EIF4E and EIF4G; this interaction mediates the translation of the VPg-viral RNA conjugates. VPg is uridylylated by the polymerase and is covalently attached to the 5'-end of the genomic RNA. This uridylylated form acts as a nucleotide-peptide primer for the polymerase. Post-translationally, potyviral RNA is expressed as two polyproteins which undergo post-translational proteolytic processing. Genome polyprotein is processed by NIa-pro, P1 and HC-pro proteinases resulting in the production of at least ten individual proteins. P3N-PIPO polyprotein is cleaved by P1 and HC-pro proteinases resulting in the production of three individual proteins. The P1 proteinase and the HC-pro cleave only their respective C-termini autocatalytically. 6K1 is essential for proper proteolytic separation of P3 from CI.

It localises to the host cytoplasmic vesicle. Its subcellular location is the host nucleus. The protein localises to the virion. The catalysed reaction is RNA(n) + a ribonucleoside 5'-triphosphate = RNA(n+1) + diphosphate. The enzyme catalyses Hydrolyzes glutaminyl bonds, and activity is further restricted by preferences for the amino acids in P6 - P1' that vary with the species of potyvirus, e.g. Glu-Xaa-Xaa-Tyr-Xaa-Gln-|-(Ser or Gly) for the enzyme from tobacco etch virus. The natural substrate is the viral polyprotein, but other proteins and oligopeptides containing the appropriate consensus sequence are also cleaved.. It catalyses the reaction Hydrolyzes a Gly-|-Gly bond at its own C-terminus, commonly in the sequence -Tyr-Xaa-Val-Gly-|-Gly, in the processing of the potyviral polyprotein.. Functionally, required for aphid transmission and also has proteolytic activity. Only cleaves a Gly-Gly dipeptide at its own C-terminus. Interacts with virions and aphid stylets. Acts as a suppressor of RNA-mediated gene silencing, also known as post-transcriptional gene silencing (PTGS), a mechanism of plant viral defense that limits the accumulation of viral RNAs. May have RNA-binding activity. In terms of biological role, has helicase activity. It may be involved in replication. Indispensable for virus replication. Reduces the abundance of host transcripts related to jasmonic acid biosynthesis therefore altering the host defenses. In order to increase its own stability, decreases host protein degradation pathways. Its function is as follows. Indispensable for virus replication. Functionally, mediates the cap-independent, EIF4E-dependent translation of viral genomic RNAs. Binds to the cap-binding site of host EIF4E and thus interferes with the host EIF4E-dependent mRNA export and translation. VPg-RNA directly binds EIF4E and is a template for transcription. Also forms trimeric complexes with EIF4E-EIF4G, which are templates for translation. In terms of biological role, has RNA-binding and proteolytic activities. An RNA-dependent RNA polymerase that plays an essential role in the virus replication. Its function is as follows. Involved in aphid transmission, cell-to-cell and systemis movement, encapsidation of the viral RNA and in the regulation of viral RNA amplification. The protein is Genome polyprotein of Beet mosaic virus (BtMV).